The following is an 832-amino-acid chain: MPLSYQHFRRLLLLDDEAGPLEEELPRLADEGLNRHVAEELNLGNLNVSIPWTHKVGNFTGLYSSTVPVFNPHWKTPSFPNIHLHQDIIKKCEQFVGPLTVNEKRRLQLIMPARFYPKVTKYLPLDKGIKPYYPEHLVNHYFQTRHYLHTLWKAGVLYKRETTHSASFCGSPYSWEQELQHGAESFHQQSSGILSRPPVGSSLQSKHCKSRLGLQSQQGLLARRQQGRSWSIRAGIHPTARRPFGVEPSGSGHTTNLASKSASCLHQSPVRKATYPSVSTFEKHSSSGHAVELHNLPPNSARSQSERPVSPCWWLQFRNSKPCSDYCLSHIVNLLEDWGPCAEHGEHHIRIPRTPARVTGGVFLVDKNPHNTEESRLVVDFSQFSRGNHRVSWPKFAVPNLQSLTNLLSSNLSWLSLDVSAAFYHLPLHPAAMPHLLVGSSGLSRYVARLSSDSRIFNHQHGTMQNLHDSCSRNLYVSLLLLYQTFGRKLHLYSHPIILGFRKIPMGVGLSPFLLAQFTSAICSVVRRAFPHCLAFSYMDDVVLGAKTVHHLESLFTAVTNFLLSLGIHLNPNKTKRWGYSLHFMGYVIGCYGSLPQDHIIQKIKECFRKLPVNRPIDWKVCQRIVGLLGFAAPFTQCGYPALMPLYACIQSKQAFTFSPTYKAFLCKQYLNLYPVARQRPGLCQVFADATPTGWGLVMGHQRMRGTFQAPLPIHTAELLAACFARSRSGANILGTDNSVVLSRKYTSFPWLLGCAANWILRGTSFVYVPSALNPADDPSRGRLGLSRPLLRLPFRPTTGRTSLYADSPSVPSHLPDRVHFASPLHVAWRPP.

The tract at residues 1–177 is terminal protein domain (TP); it reads MPLSYQHFRR…FCGSPYSWEQ (177 aa). A spacer region spans residues 178-335; that stretch reads ELQHGAESFH…YCLSHIVNLL (158 aa). The interval 241-263 is disordered; it reads RRPFGVEPSGSGHTTNLASKSAS. Residues 251 to 263 are compositionally biased toward polar residues; that stretch reads SGHTTNLASKSAS. The polymerase/reverse transcriptase domain (RT) stretch occupies residues 336–679; the sequence is EDWGPCAEHG…YLNLYPVARQ (344 aa). The Reverse transcriptase domain occupies 346 to 589; that stretch reads EHHIRIPRTP…YSLHFMGYVI (244 aa). Residues D418, D540, and D541 each contribute to the Mg(2+) site.

This sequence belongs to the hepadnaviridae P protein family.

The catalysed reaction is DNA(n) + a 2'-deoxyribonucleoside 5'-triphosphate = DNA(n+1) + diphosphate. It catalyses the reaction Endonucleolytic cleavage to 5'-phosphomonoester.. Activated by host HSP70 and HSP40 in vitro to be able to bind the epsilon loop of the pgRNA. Because deletion of the RNase H region renders the protein partly chaperone-independent, the chaperones may be needed indirectly to relieve occlusion of the RNA-binding site by this domain. Inhibited by several reverse-transcriptase inhibitors: Lamivudine, Adefovir and Entecavir. Its function is as follows. Multifunctional enzyme that converts the viral RNA genome into dsDNA in viral cytoplasmic capsids. This enzyme displays a DNA polymerase activity that can copy either DNA or RNA templates, and a ribonuclease H (RNase H) activity that cleaves the RNA strand of RNA-DNA heteroduplexes in a partially processive 3'- to 5'-endonucleasic mode. Neo-synthesized pregenomic RNA (pgRNA) are encapsidated together with the P protein, and reverse-transcribed inside the nucleocapsid. Initiation of reverse-transcription occurs first by binding the epsilon loop on the pgRNA genome, and is initiated by protein priming, thereby the 5'-end of (-)DNA is covalently linked to P protein. Partial (+)DNA is synthesized from the (-)DNA template and generates the relaxed circular DNA (RC-DNA) genome. After budding and infection, the RC-DNA migrates in the nucleus, and is converted into a plasmid-like covalently closed circular DNA (cccDNA). The activity of P protein does not seem to be necessary for cccDNA generation, and is presumably released from (+)DNA by host nuclear DNA repair machinery. This is Protein P from Homo sapiens (Human).